The primary structure comprises 571 residues: MNAEEDPKPADSDSSEECIICLSNLPNCPLDQWDSSSVPASISSTLDGLRIAKIPCGHYFHNHCLESWCRVANTCPLCRTEFLKVDVLEFVKGPWYRAYPVEEKTQSVANAGEPFEDEGSETCRCVICGRSDHAEVLLLCDGCDDAYHTYCLNMDAVPIEEFYCPNCVLLNYQENETLSSRISLSRRGQTRRRRVGAAARASRVSQQQQRAWTRAWNAIRNRAWDALNSDLSYYGMQQERLPARDVSSELLRRRIESARLRSNQLNEPVEQPRVVQTPVTNASEQQAWNDFDEILHANSSVHSVATEATISNPRPSSGRFQQTPIEEHHQQDTRFVNDPNSTSHDRRQKRPTRRHIPCSNKSSGSSTVLGNNSSSKSENSFLASLISNINQPSTSRIDTSFMLSLQHEIKNSHSEASDGTSDVHLTPLFSNLSPRPSHVPLSPREISNDNLDDHLIELSEPGEIVDNHLVNDTSMHQRRTSGRHDLVHSSKKVSYETKYRIERLVNAALKPYYREAKISKDQFALFNKNICRSVYTALSDGTLSLEGPQQHKISKTIREKVVNCIQSLSND.

An RING-type 1; atypical zinc finger spans residues 18–79; it reads CIICLSNLPN…RVANTCPLCR (62 aa). Residues 122–170 form a PHD-type zinc finger; sequence TCRCVICGRSDHAEVLLLCDGCDDAYHTYCLNMDAVPIEEFYCPNCVLL. The RING-type 2; degenerate zinc finger occupies 125-168; the sequence is CVICGRSDHAEVLLLCDGCDDAYHTYCLNMDAVPIEEFYCPNCV. Polar residues predominate over residues 305-324; it reads ATEATISNPRPSSGRFQQTP. The segment at 305 to 377 is disordered; it reads ATEATISNPR…VLGNNSSSKS (73 aa). Basic residues predominate over residues 346–356; sequence RRQKRPTRRHI. Residues 359–377 are compositionally biased toward polar residues; that stretch reads SNKSSGSSTVLGNNSSSKS.

It is found in the cytoplasm. The protein resides in the nucleus. The chain is PHD and RING finger domain-containing protein C126.07c from Schizosaccharomyces pombe (strain 972 / ATCC 24843) (Fission yeast).